A 445-amino-acid chain; its full sequence is Peptide chain release factor 1, mitochondrial (445 aa).

The transit peptide at 1–61 (MNRHLCVWLF…LLSKNWSRRY (61 aa)) directs the protein to the mitochondrion. The interval 297–361 (PKDLRIDTFR…LRARLYQQII (65 aa)) is GGQ domain. The GGQ motif lies at 311–313 (GGQ). Gln313 is subject to N5-methylglutamine.

Belongs to the prokaryotic/mitochondrial release factor family. Methylation of glutamine in the GGQ triplet by HEMK1 is conserved from bacteria to mammals.

It localises to the mitochondrion. Functionally, mitochondrial peptide chain release factor that directs the termination of translation in response to the peptide chain non-canonical stop codons AGG and AGA. Non-canonical termination codons AGG and AGA are found at the end of MT-CO1/COX1 and MT-ND6/ND6 open reading frames, respectively. Recognizes non-canonical stop codons via a network of interactions between the codon, MTRF1 and the ribosomal RNA (rRNA): in contrast to other translation release factors, which identify the codon in the A-site via direct interactions of amino acid side chains with the bases, MTRF1 repositions the first 2 bases of the stop codon to use an intricate network of interactions that includes residues of the release factor, the rRNA of the small ribosomal subunit, as well as neighboring bases of the mRNA. The chain is Peptide chain release factor 1, mitochondrial from Homo sapiens (Human).